The following is a 466-amino-acid chain: Methylenetetrahydrofolate--tRNA-(uracil-5-)-methyltransferase TrmFO (466 aa).

16 to 21 (GGGMAG) contacts FAD.

The protein belongs to the MnmG family. TrmFO subfamily. FAD is required as a cofactor.

The protein resides in the cytoplasm. The catalysed reaction is uridine(54) in tRNA + (6R)-5,10-methylene-5,6,7,8-tetrahydrofolate + NADH + H(+) = 5-methyluridine(54) in tRNA + (6S)-5,6,7,8-tetrahydrofolate + NAD(+). It catalyses the reaction uridine(54) in tRNA + (6R)-5,10-methylene-5,6,7,8-tetrahydrofolate + NADPH + H(+) = 5-methyluridine(54) in tRNA + (6S)-5,6,7,8-tetrahydrofolate + NADP(+). Its function is as follows. Catalyzes the folate-dependent formation of 5-methyl-uridine at position 54 (M-5-U54) in all tRNAs. The chain is Methylenetetrahydrofolate--tRNA-(uracil-5-)-methyltransferase TrmFO from Maricaulis maris (strain MCS10) (Caulobacter maris).